A 132-amino-acid chain; its full sequence is U11/U12 small nuclear ribonucleoprotein 25 kDa protein (132 aa).

A Ubiquitin-like domain is found at 41–132 (MTVRVCKMDG…VSFIKKLRQK (92 aa)).

Component of the U11/U12 snRNPs that are part of the U12-type spliceosome.

The protein localises to the nucleus. The protein is U11/U12 small nuclear ribonucleoprotein 25 kDa protein (SNRNP25) of Homo sapiens (Human).